The primary structure comprises 197 residues: ATP-dependent Clp protease proteolytic subunit (197 aa).

The active-site Nucleophile is S98. H123 is a catalytic residue.

This sequence belongs to the peptidase S14 family. As to quaternary structure, fourteen ClpP subunits assemble into 2 heptameric rings which stack back to back to give a disk-like structure with a central cavity, resembling the structure of eukaryotic proteasomes.

The protein localises to the cytoplasm. It catalyses the reaction Hydrolysis of proteins to small peptides in the presence of ATP and magnesium. alpha-casein is the usual test substrate. In the absence of ATP, only oligopeptides shorter than five residues are hydrolyzed (such as succinyl-Leu-Tyr-|-NHMec, and Leu-Tyr-Leu-|-Tyr-Trp, in which cleavage of the -Tyr-|-Leu- and -Tyr-|-Trp bonds also occurs).. Its function is as follows. Cleaves peptides in various proteins in a process that requires ATP hydrolysis. Has a chymotrypsin-like activity. Plays a major role in the degradation of misfolded proteins. In Lysinibacillus sphaericus (strain C3-41), this protein is ATP-dependent Clp protease proteolytic subunit.